Consider the following 207-residue polypeptide: LexA repressor (207 aa).

Residues 28–48 (VREIGEAVGLASSSTVHGHLA) constitute a DNA-binding region (H-T-H motif). Residues Ser-129 and Lys-167 each act as for autocatalytic cleavage activity in the active site.

The protein belongs to the peptidase S24 family. Homodimer.

The catalysed reaction is Hydrolysis of Ala-|-Gly bond in repressor LexA.. In terms of biological role, represses a number of genes involved in the response to DNA damage (SOS response), including recA and lexA. In the presence of single-stranded DNA, RecA interacts with LexA causing an autocatalytic cleavage which disrupts the DNA-binding part of LexA, leading to derepression of the SOS regulon and eventually DNA repair. In Bacillus licheniformis (strain ATCC 14580 / DSM 13 / JCM 2505 / CCUG 7422 / NBRC 12200 / NCIMB 9375 / NCTC 10341 / NRRL NRS-1264 / Gibson 46), this protein is LexA repressor.